A 157-amino-acid chain; its full sequence is Small ribosomal subunit protein uS7 (157 aa).

It belongs to the universal ribosomal protein uS7 family. Part of the 30S ribosomal subunit. Contacts proteins S9 and S11.

Functionally, one of the primary rRNA binding proteins, it binds directly to 16S rRNA where it nucleates assembly of the head domain of the 30S subunit. Is located at the subunit interface close to the decoding center, probably blocks exit of the E-site tRNA. This Chlamydia trachomatis serovar L2 (strain ATCC VR-902B / DSM 19102 / 434/Bu) protein is Small ribosomal subunit protein uS7.